Here is a 561-residue protein sequence, read N- to C-terminus: MFAIDPLKHSKLYEEYGLYLRPHQINQEIKPTTIKKKELAPTIRSIRYASLLHSMLAKHAARHNGTLINPRMYADMITLGNTKVTVTKGTPKAQIDTLKMNGLTVVSKSRRNNKKKPVSDTTATTDENTNDIVTYKALTEMSTLVESFHLPSGLTLIVFDDEKYQSLIPDYINQLITYTQPHIIPTWQGIADFSDPYLRSYFRRPFELTASNLASPQKHNLSPLTRSIFNNTGREDAIIKKLYGYGEYIFIKYEGCLITWTGVYGAVAMMVNLPKRDLGLDAGDNFLKEYKQLLFYGVITDATPSGISAKSTVIKISPHKMMNPSGGALAVLSKFLEAVVSANVINATLVVYAEKGAGKTSFLSTYAERLSVASGQAVGHLSSDAYGRWLAKNKDVKEPSFEYDYVLSRDTDDTESYYEQRASELLTLHGISELAQYELLSVRKKVKMMNEMNEILIAQLENADTHSERNFYYMVSTGKNTPRTLIVEGHFNAQDATIARTDTTVLLRTINDTTQAMRDRQRSGVVQLFLRDTYYRLLPSLHTTVYPFEMLESIKRWKWVH.

In terms of assembly, interacts with VP2.

Its subcellular location is the virion. The protein localises to the host cytoplasm. The protein resides in the host cytoskeleton. Its function is as follows. Minor inner capsid component. Displays NTPase and RNA 5'-triphosphatase (RTPase) activities. May function as a cofactor of polymerase VP2. Associates with microtubules and plays a role in the formation, structural organization and morphology of viral inclusions, where the assembly of cores and the replication of viral RNA occur. This is Microtubule-associated protein VP6 (S6) from Lymantria dispar cypovirus 1 (isolate Rao) (LdCPV-1).